A 120-amino-acid polypeptide reads, in one-letter code: Large ribosomal subunit protein uL22 (120 aa).

This sequence belongs to the universal ribosomal protein uL22 family. In terms of assembly, part of the 50S ribosomal subunit.

Its function is as follows. This protein binds specifically to 23S rRNA; its binding is stimulated by other ribosomal proteins, e.g. L4, L17, and L20. It is important during the early stages of 50S assembly. It makes multiple contacts with different domains of the 23S rRNA in the assembled 50S subunit and ribosome. The globular domain of the protein is located near the polypeptide exit tunnel on the outside of the subunit, while an extended beta-hairpin is found that lines the wall of the exit tunnel in the center of the 70S ribosome. In Corynebacterium efficiens (strain DSM 44549 / YS-314 / AJ 12310 / JCM 11189 / NBRC 100395), this protein is Large ribosomal subunit protein uL22.